The following is a 258-amino-acid chain: uncharacterized protein (258 aa).

This is an uncharacterized protein from Acidianus filamentous virus 2 (isolate Italy/Pozzuoli) (AFV-2).